We begin with the raw amino-acid sequence, 523 residues long: Probable endopeptidase p60 (523 aa).

Residues 1–27 (MNMKKATIAATAGIAVTAFAAPTIASA) form the signal peptide. One can recognise a LysM 1 domain in the interval 28–71 (STVVVEAGDTLWGIAQDNGTTVDALKKANKLTTDKIVPGQKLQV). One can recognise an SH3b domain in the interval 78–142 (KTEKSVSATW…VNGKYLGNAV (65 aa)). The tract at residues 146 to 188 (PSATPEVKQEETTQAAPAQQTKTEVKQATPAATTEKDAVETKT) is disordered. Over residues 157-167 (TTQAAPAQQTK) the composition is skewed to low complexity. The LysM 2 domain occupies 198–241 (TTHTVKSGDTIWALSVKYGASVQDLMSWNNLSSSSIYVGQNIAV). Low complexity-rich tracts occupy residues 251–282 (PKAE…TTTT) and 290–318 (EKQT…TNAS). Disordered stretches follow at residues 251-323 (PKAE…YTVK) and 367-408 (ATNT…SSSA). One can recognise a LysM 3 domain in the interval 318-361 (SSYTVKSGDTLGKIASTFGTTVSKIKALNGLTSDNLQVGDVLKV). A NlpC/P60 domain is found at 405–523 (SSSASAIIAE…GQYLVGFGRV (119 aa)). Cys-435 acts as the Nucleophile in catalysis. His-485 (proton acceptor) is an active-site residue. The active site involves Asn-497.

The protein belongs to the peptidase C40 family.

Functionally, this major extracellular protein may be involved in the invasion of non-professional phagocytic cells by Listeria. This is Probable endopeptidase p60 (iap) from Listeria seeligeri.